Consider the following 297-residue polypeptide: MNDPVQNSGLVVVDKPAGMTSHDVVSKLRRAFSTRKVGHAGTLDPMATGVLVVGIERGTRFLAHLVATTKAYDATIRLGASTTTDDREGDVVFSADASTLDDEQITTAVTSLTGEIMQKPASVSAIKIDGKRAHERVRDGEVVDIPARPVTVSVFDVLEQRREGGFVDLDVRVHCSSGTYIRSLARDLGAALGVGGHLTALRRTEVGPFTLEDAIPLADLQDNARLSLSLDEALARSYPVLEITEAEGEALSMGKWLEPRGLKGVHAAVTPSGRSIALVEEKGKRLATVFVARPNTL.

Residue Asp-44 is the Nucleophile of the active site.

Belongs to the pseudouridine synthase TruB family. Type 1 subfamily.

The catalysed reaction is uridine(55) in tRNA = pseudouridine(55) in tRNA. Functionally, responsible for synthesis of pseudouridine from uracil-55 in the psi GC loop of transfer RNAs. The protein is tRNA pseudouridine synthase B of Corynebacterium efficiens (strain DSM 44549 / YS-314 / AJ 12310 / JCM 11189 / NBRC 100395).